Here is a 942-residue protein sequence, read N- to C-terminus: UvrABC system protein A (942 aa).

32–39 (GLSGSGKS) is an ATP binding site. The segment at 251-278 (CPVCGFTVPELEPRLFSFNAPFGSCPTC) adopts a C4-type zinc-finger fold. ABC transporter domains are found at residues 308 to 589 (WNPI…KKSI) and 609 to 937 (GNGR…HYLK). 641–648 (GVSGSGKS) lines the ATP pocket. The segment at 740 to 766 (CEACSGDGIIKIEMHFLPDVYVPCEVC) adopts a C4-type zinc-finger fold.

This sequence belongs to the ABC transporter superfamily. UvrA family. As to quaternary structure, forms a heterotetramer with UvrB during the search for lesions.

It is found in the cytoplasm. The UvrABC repair system catalyzes the recognition and processing of DNA lesions. UvrA is an ATPase and a DNA-binding protein. A damage recognition complex composed of 2 UvrA and 2 UvrB subunits scans DNA for abnormalities. When the presence of a lesion has been verified by UvrB, the UvrA molecules dissociate. The protein is UvrABC system protein A of Streptococcus pyogenes serotype M18 (strain MGAS8232).